A 95-amino-acid chain; its full sequence is ESAT-6-like protein EsxC (95 aa).

It belongs to the WXG100 family. ESAT-6 subfamily.

It is found in the secreted. The chain is ESAT-6-like protein EsxC from Mycobacterium tuberculosis (strain CDC 1551 / Oshkosh).